We begin with the raw amino-acid sequence, 677 residues long: MNFELTSAYKPTGDQPEAIAQLTEGVLEGVPAQTLLGVTGSGKTFTIANVIANINKPTLILSHNKTLAAQLYSEFKGFFPNNAVEYYVSYYDYYQPEAYLPSSDTYIEKDLAINDEIDKLRLAATSALLSGRKDVVVVSSVSCIYGMGNPSDFYNNVIEIERGRTINRNVFLRRLVDSLYMRNDIELNRGNFRVKGDTVDIYLAYSDNLLRVTFWGDEIDGIEEVDPVSGVTIAPFEAYKIYPANLFMTTKEATLRAIHEIEDDLTKQVAYFESIGKEYEAKRLYERVTYDMEMIRELGHCSGIENYSRYFDGRAAGTRPYCLLDFFPDDFLIVIDESHVSVPQIRAMYGGDRARKINLVEYGFRLPAAMDNRPLKFEEFESMAKQVIYVSATPADYELVQSEGIVVEQVIRPTGLLDPVIEVRPSLNQIDDLMEEIQIRIEKEERVLVTTLTKRMAEELTEYLLNNNVRCNYIHSDVDTLERVKIMDDLRQGVYDVLIGVNLLREGLDLPEVSLVAILDADKEGFLRSHRSLTQTAGRAARNVNGMVIMYADKITDSMRLTIDETNRRREKQLAYNEEHGITPQQIKKARNLSVFGNGAETEDTQKGTRAYVEPSSPNIAADPVVQYMSKAQLEKSMERTRKLMQEAAKKLEFIEAAQYRDELLKMEDLMKEKWPG.

One can recognise a Helicase ATP-binding domain in the interval 24 to 412 (EGVLEGVPAQ…EGIVVEQVIR (389 aa)). Position 37–44 (37–44 (GVTGSGKT)) interacts with ATP. The Beta-hairpin motif lies at 90–113 (YYDYYQPEAYLPSSDTYIEKDLAI). A Helicase C-terminal domain is found at 429-591 (QIDDLMEEIQ…ITPQQIKKAR (163 aa)). The region spanning 635–670 (EKSMERTRKLMQEAAKKLEFIEAAQYRDELLKMEDL) is the UVR domain.

This sequence belongs to the UvrB family. In terms of assembly, forms a heterotetramer with UvrA during the search for lesions. Interacts with UvrC in an incision complex.

The protein localises to the cytoplasm. The UvrABC repair system catalyzes the recognition and processing of DNA lesions. A damage recognition complex composed of 2 UvrA and 2 UvrB subunits scans DNA for abnormalities. Upon binding of the UvrA(2)B(2) complex to a putative damaged site, the DNA wraps around one UvrB monomer. DNA wrap is dependent on ATP binding by UvrB and probably causes local melting of the DNA helix, facilitating insertion of UvrB beta-hairpin between the DNA strands. Then UvrB probes one DNA strand for the presence of a lesion. If a lesion is found the UvrA subunits dissociate and the UvrB-DNA preincision complex is formed. This complex is subsequently bound by UvrC and the second UvrB is released. If no lesion is found, the DNA wraps around the other UvrB subunit that will check the other stand for damage. This chain is UvrABC system protein B, found in Bacteroides fragilis (strain ATCC 25285 / DSM 2151 / CCUG 4856 / JCM 11019 / LMG 10263 / NCTC 9343 / Onslow / VPI 2553 / EN-2).